The primary structure comprises 313 residues: MKRRRRWRGWLLFLALCFCLLCEAVETNATTVTSTTAAAATTNTTVATTGTTTTSPNVTSTTSNTVTTPTTVSSVSNLTSSATSILISTSTVSGTRNTRNNNTTTIGTNATSPSSSVSILTTVTPAATSTTSNNGDVTSDYTPTFDLENITTTRAPTRPPAQDLCSHNLSIILYEEESQSSVDIAVDEEEPELEDDDEYDELWFPLYFEAECNLNYTLQYVNHSCDYSVRQSSVSFPPWRDIDSVTFVPRNLSNCSAHGLAVIVAGNQTWYVNPFSLAHLLDAIYNVLGIEDLSANFWRQLAPYRHTLIVPQT.

A signal peptide spans 1 to 24; it reads MKRRRRWRGWLLFLALCFCLLCEA. 14 N-linked (GlcNAc...) asparagine; by host glycosylation sites follow: Asn28, Asn43, Asn57, Asn77, Asn101, Asn102, Asn109, Asn149, Asn168, Asn215, Asn222, Asn251, Asn254, and Asn267. Residues 47 to 73 are disordered; sequence ATTGTTTTSPNVTSTTSNTVTTPTTVS. The segment covering 90 to 114 has biased composition (low complexity); that stretch reads STVSGTRNTRNNNTTTIGTNATSPS. The interval 90–117 is disordered; that stretch reads STVSGTRNTRNNNTTTIGTNATSPSSSV.

This sequence belongs to the HHV-5 US34A protein family.

This is an uncharacterized protein from Homo sapiens (Human).